The chain runs to 423 residues: Mitogen-activated protein kinase 9 (423 aa).

Residues 26 to 321 (YQQLKPIGSG…VDEALRHPYI (296 aa)) form the Protein kinase domain. Residues 32–40 (IGSGAQGIV) and Lys-55 contribute to the ATP site. Asp-151 acts as the Proton acceptor in catalysis. Thr-183 is subject to Phosphothreonine; by MAP2K7. The TXY motif lies at 183-185 (TPY). A Phosphotyrosine; by MAP2K4 modification is found at Tyr-185. The span at 366–375 (RSKNGVKDQP) shows a compositional bias: basic and acidic residues. The segment at 366–423 (RSKNGVKDQPSDAAVSSKATPSQSSSINDISSMSTEHTLASDTDSSLDASTGPLEGCR) is disordered. Positions 387–416 (SQSSSINDISSMSTEHTLASDTDSSLDAST) are enriched in low complexity.

This sequence belongs to the protein kinase superfamily. CMGC Ser/Thr protein kinase family. MAP kinase subfamily. Interacts with MECOM. Binds to at least four scaffolding proteins, MAPK8IP1/JIP-1, MAPK8IP2/JIP-2, MAPK8IP3/JIP-3/JSAP1 and SPAG9/MAPK8IP4/JIP-4. These proteins also bind other components of the JNK signaling pathway. Interacts with NFATC4. Interacts with ATF7; the interaction does not phosphorylate ATF7 but acts as a docking site for ATF7-associated partners such as JUN. Interacts with BCL10. Interacts with CTNNB1 and GSK3B. Interacts with DCLK2. Interacts with MAPKBP1. Interacts with POU5F1; phosphorylates POU5F1 at 'Ser-347'. Found in a complex with SH3RF1, RAC2, MAP3K7/TAK1, MAP2K7/MKK7, MAPK8IP1/JIP1 and MAPK8/JNK1. The cofactor is Mg(2+). Post-translationally, dually phosphorylated on Thr-183 and Tyr-185 by MAP2K7 and MAP2K4, which activates the enzyme. Autophosphorylated in vitro.

Its subcellular location is the cytoplasm. The protein resides in the nucleus. It carries out the reaction L-seryl-[protein] + ATP = O-phospho-L-seryl-[protein] + ADP + H(+). The enzyme catalyses L-threonyl-[protein] + ATP = O-phospho-L-threonyl-[protein] + ADP + H(+). Its activity is regulated as follows. Activated by threonine and tyrosine phosphorylation by either of two dual specificity kinases, MAP2K4 and MAP2K7. MAP2K4 shows a strong preference for Tyr-185 while MAP2K7 phosphorylates Tyr-183 preferentially. Inhibited by dual specificity phosphatases, such as DUSP1. Serine/threonine-protein kinase involved in various processes such as cell proliferation, differentiation, migration, transformation and programmed cell death. Extracellular stimuli such as pro-inflammatory cytokines or physical stress stimulate the stress-activated protein kinase/c-Jun N-terminal kinase (SAP/JNK) signaling pathway. In this cascade, two dual specificity kinases MAP2K4/MKK4 and MAP2K7/MKK7 phosphorylate and activate MAPK9/JNK2. In turn, MAPK9/JNK2 phosphorylates a number of transcription factors, primarily components of AP-1 such as JUN and ATF2 and thus regulates AP-1 transcriptional activity. In response to oxidative or ribotoxic stresses, inhibits rRNA synthesis by phosphorylating and inactivating the RNA polymerase 1-specific transcription initiation factor RRN3. Promotes stressed cell apoptosis by phosphorylating key regulatory factors including TP53 and YAP1. In T-cells, MAPK8 and MAPK9 are required for polarized differentiation of T-helper cells into Th1 cells. Upon T-cell receptor (TCR) stimulation, is activated by CARMA1, BCL10, MAP2K7 and MAP3K7/TAK1 to regulate JUN protein levels. Plays an important role in the osmotic stress-induced epithelial tight-junctions disruption. When activated, promotes beta-catenin/CTNNB1 degradation and inhibits the canonical Wnt signaling pathway. Also participates in neurite growth in spiral ganglion neurons. Phosphorylates the CLOCK-BMAL1 heterodimer and plays a role in the regulation of the circadian clock. Phosphorylates POU5F1, which results in the inhibition of POU5F1's transcriptional activity and enhances its proteasomal degradation. Phosphorylates ALKBH5 in response to reactive oxygen species (ROS), promoting ALKBH5 sumoylation and inactivation. In Rattus norvegicus (Rat), this protein is Mitogen-activated protein kinase 9 (Mapk9).